Consider the following 728-residue polypeptide: 1,4-alpha-glucan branching enzyme GlgB (728 aa).

Residue D405 is the Nucleophile of the active site. Residue E458 is the Proton donor of the active site.

This sequence belongs to the glycosyl hydrolase 13 family. GlgB subfamily. Monomer.

It carries out the reaction Transfers a segment of a (1-&gt;4)-alpha-D-glucan chain to a primary hydroxy group in a similar glucan chain.. It functions in the pathway glycan biosynthesis; glycogen biosynthesis. Its function is as follows. Catalyzes the formation of the alpha-1,6-glucosidic linkages in glycogen by scission of a 1,4-alpha-linked oligosaccharide from growing alpha-1,4-glucan chains and the subsequent attachment of the oligosaccharide to the alpha-1,6 position. The protein is 1,4-alpha-glucan branching enzyme GlgB of Escherichia coli O6:H1 (strain CFT073 / ATCC 700928 / UPEC).